The following is a 492-amino-acid chain: GTPase Der (492 aa).

2 consecutive EngA-type G domains span residues 3–166 and 205–378; these read PVVA…VDEV and IKLA…DSAT. Residues 9–16, 56–60, 118–121, 211–218, 258–262, and 323–326 contribute to the GTP site; these read GRPNVGKS, DTGGI, NKTD, DTAGV, and NKWD. One can recognise a KH-like domain in the interval 379–463; the sequence is RRVSTAMLTR…PIRIQFKEGE (85 aa).

Belongs to the TRAFAC class TrmE-Era-EngA-EngB-Septin-like GTPase superfamily. EngA (Der) GTPase family. Associates with the 50S ribosomal subunit.

Its function is as follows. GTPase that plays an essential role in the late steps of ribosome biogenesis. In Klebsiella pneumoniae subsp. pneumoniae (strain ATCC 700721 / MGH 78578), this protein is GTPase Der.